We begin with the raw amino-acid sequence, 656 residues long: tRNA(Met) cytidine acetyltransferase TmcA (656 aa).

ATP contacts are provided by residues Gln145, 167 to 176, and Arg291; that span reads GRGKSALLGM. The N-acetyltransferase domain maps to 368 to 542; it reads SEGKYNRQFF…SGCYSAIALK (175 aa). Residues 474-476, 481-487, and Glu510 each bind acetyl-CoA; these read IAV and QQKGIGQ.

This sequence belongs to the RNA cytidine acetyltransferase family. TmcA subfamily.

It is found in the cytoplasm. It catalyses the reaction cytidine(34) in elongator tRNA(Met) + acetyl-CoA + ATP + H2O = N(4)-acetylcytidine(34) in elongator tRNA(Met) + ADP + phosphate + CoA + H(+). Catalyzes the formation of N(4)-acetylcytidine (ac(4)C) at the wobble position of tRNA(Met), by using acetyl-CoA as an acetyl donor and ATP (or GTP). The protein is tRNA(Met) cytidine acetyltransferase TmcA of Haemophilus influenzae (strain ATCC 51907 / DSM 11121 / KW20 / Rd).